A 105-amino-acid polypeptide reads, in one-letter code: UPF0145 protein AHA_2580 (105 aa).

The protein belongs to the UPF0145 family.

The chain is UPF0145 protein AHA_2580 from Aeromonas hydrophila subsp. hydrophila (strain ATCC 7966 / DSM 30187 / BCRC 13018 / CCUG 14551 / JCM 1027 / KCTC 2358 / NCIMB 9240 / NCTC 8049).